The chain runs to 336 residues: Probable allantoicase 2 (336 aa).

Belongs to the allantoicase family.

The catalysed reaction is allantoate + H2O = (S)-ureidoglycolate + urea. It participates in nitrogen metabolism; (S)-allantoin degradation; (S)-ureidoglycolate from allantoate (aminidohydrolase route): step 1/1. The chain is Probable allantoicase 2 from Burkholderia mallei (strain ATCC 23344).